Here is a 622-residue protein sequence, read N- to C-terminus: DNA mismatch repair protein MutL (622 aa).

The disordered stretch occupies residues 376-401 (REVREGSSTGRAGNYQPPEPPSREAM).

It belongs to the DNA mismatch repair MutL/HexB family.

Functionally, this protein is involved in the repair of mismatches in DNA. It is required for dam-dependent methyl-directed DNA mismatch repair. May act as a 'molecular matchmaker', a protein that promotes the formation of a stable complex between two or more DNA-binding proteins in an ATP-dependent manner without itself being part of a final effector complex. In Aeromonas hydrophila subsp. hydrophila (strain ATCC 7966 / DSM 30187 / BCRC 13018 / CCUG 14551 / JCM 1027 / KCTC 2358 / NCIMB 9240 / NCTC 8049), this protein is DNA mismatch repair protein MutL.